We begin with the raw amino-acid sequence, 875 residues long: Alanine--tRNA ligase (875 aa).

Residues His-564, His-568, Cys-666, and His-670 each coordinate Zn(2+).

Belongs to the class-II aminoacyl-tRNA synthetase family. In terms of assembly, homotetramer. Zn(2+) serves as cofactor.

It localises to the cytoplasm. It carries out the reaction tRNA(Ala) + L-alanine + ATP = L-alanyl-tRNA(Ala) + AMP + diphosphate. In terms of biological role, catalyzes the attachment of alanine to tRNA(Ala) in a two-step reaction: alanine is first activated by ATP to form Ala-AMP and then transferred to the acceptor end of tRNA(Ala). Also edits incorrectly charged Ser-tRNA(Ala) and Gly-tRNA(Ala) via its editing domain. The chain is Alanine--tRNA ligase from Klebsiella pneumoniae subsp. pneumoniae (strain ATCC 700721 / MGH 78578).